The sequence spans 202 residues: Matrix protein (202 aa).

The tract at residues 12–33 (RDEDTQKPSPVSAPPDDDDLWL) is disordered. The PPXY motif signature appears at 35–38 (PPEY). The tract at residues 115 to 151 (KLRRTLIFQWADSRGPLEGEELEYSQEITWDDDTEFV) is essential for glycoprotein binding.

This sequence belongs to the lyssavirus matrix protein family. Homomultimer. Interacts with nucleoprotein and with the cytoplasmic domain of glycoprotein. Interacts with host ATP6V1A; this interaction plays an important role in virion uncoating after viral entry.

Its subcellular location is the virion membrane. The protein resides in the host endomembrane system. It is found in the host cytoplasm. Plays a major role in assembly, budding and uncoating of virion after membrane fusion. Completely covers the ribonucleoprotein coil and keep it in condensed bullet-shaped form. Inhibits viral transcription and stimulates replication. Plays a major role in early induction of TRAIL-mediated apoptosis in infected neurons. Inhibits the integrated stress response (ISR) in the infected cell by blocking the formation of stress granules. The sequence is that of Matrix protein (M) from Rabies virus (strain PM1503/AVO1) (RABV).